Reading from the N-terminus, the 461-residue chain is Nicotianamine aminotransferase A (461 aa).

Positions 1–29 (MVHQSNGHGEAAAAAANGKSNGHAAAANG) are disordered. Residues 11-29 (AAAAAANGKSNGHAAAANG) are compositionally biased toward low complexity. An N6-(pyridoxal phosphate)lysine modification is found at Lys-289.

This sequence belongs to the class-I pyridoxal-phosphate-dependent aminotransferase family. It depends on pyridoxal 5'-phosphate as a cofactor. In terms of tissue distribution, expressed in roots, but not in leaves.

The enzyme catalyses nicotianamine + 2-oxoglutarate = 3''-deamino-3''-oxonicotianamine + L-glutamate. In terms of biological role, involved in biosynthesis of mugineic acid family phytosiderophores. This Hordeum vulgare (Barley) protein is Nicotianamine aminotransferase A.